The sequence spans 208 residues: Probable GTP-binding protein EngB (208 aa).

The EngB-type G domain maps to 23-205; it reads LTSEMVILGR…RQTLLKYLLT (183 aa). Residues 31–38, 57–61, 84–87, 154–157, and 182–184 each bind GTP; these read GRSNVGKS, GKTRL, DLPG, TKFD, and FNA. Ser-38 and Thr-59 together coordinate Mg(2+).

Belongs to the TRAFAC class TrmE-Era-EngA-EngB-Septin-like GTPase superfamily. EngB GTPase family. Mg(2+) serves as cofactor.

Functionally, necessary for normal cell division and for the maintenance of normal septation. This chain is Probable GTP-binding protein EngB, found in Helicobacter pylori (strain P12).